A 257-amino-acid chain; its full sequence is Phosphate import ATP-binding protein PstB (257 aa).

Positions 5–246 (LEIKDLTAFY…EVIFTSPKNE (242 aa)) constitute an ABC transporter domain. 37-44 (GPSGCGKS) lines the ATP pocket.

The protein belongs to the ABC transporter superfamily. Phosphate importer (TC 3.A.1.7) family. As to quaternary structure, the complex is composed of two ATP-binding proteins (PstB), two transmembrane proteins (PstC and PstA) and a solute-binding protein (PstS).

It localises to the cell membrane. It carries out the reaction phosphate(out) + ATP + H2O = ADP + 2 phosphate(in) + H(+). Functionally, part of the ABC transporter complex PstSACB involved in phosphate import. Responsible for energy coupling to the transport system. This chain is Phosphate import ATP-binding protein PstB, found in Tropheryma whipplei (strain TW08/27) (Whipple's bacillus).